The sequence spans 29 residues: Cyclotide psyleio D (29 aa).

Positions 1–29 form a cross-link, cyclopeptide (Gly-Asp); that stretch reads GLPVCGESCFGGTCNTPGCSCTWPVCTRD. 3 disulfide bridges follow: C5/C19, C9/C21, and C14/C26.

This is a cyclic peptide.

Probably participates in a plant defense mechanism. The polypeptide is Cyclotide psyleio D (Psychotria brachyceras).